Consider the following 768-residue polypeptide: Cullin-3 (768 aa).

S2 carries the N-acetylserine modification. Residues 2–41 are interaction with KLHL18; the sequence is SNLSKGTGSRKDTKMRIRAFPMTMDEKYVNSIWDLLKNAI. S585 bears the Phosphoserine mark. The disordered stretch occupies residues 677 to 698; sequence VAAKQGESDPERKETRQKVDDD. The span at 682–698 shows a compositional bias: basic and acidic residues; that stretch reads GESDPERKETRQKVDDD. The 63-residue stretch at 698 to 760 folds into the Cullin neddylation domain; sequence DRKHEIEAAI…REYLARTPED (63 aa). Residue K712 forms a Glycyl lysine isopeptide (Lys-Gly) (interchain with G-Cter in NEDD8) linkage.

Belongs to the cullin family. As to quaternary structure, forms neddylation-dependent homodimers. Component of multiple BCR (BTB-CUL3-RBX1) E3 ubiquitin-protein ligase complexes formed of CUL3, RBX1 and a variable BTB domain-containing protein acting as both, adapter to cullin and substrate recognition subunit. The BCR complex may be active as a heterodimeric complex, in which NEDD8, covalently attached to one CUL3 molecule, binds to the C-terminus of a second CUL3 molecule. Interacts with RBX1, RNF7, CYCE and TIP120A/CAND1. Part of the BCR(SPOP) containing SPOP, and of BCR containing homodimeric SPOPL or the heterodimer formed by SPOP and SPOPL. Part of the probable BCR(KLHL9-KLHL13) complex with BTB domain proteins KLHL9 and KLHL13. Part of the BCR(KLHL41) complex containing KLHL41. Component of the BCR(KLHL12) E3 ubiquitin ligase complex, at least composed of CUL3 and KLHL12 and RBX1. Component of the BCR(KLHL3) E3 ubiquitin ligase complex, at least composed of CUL3 and KLHL3 and RBX1. Part of the BCR(ENC1) complex containing ENC1. Part of a complex consisting of BMI1/PCGF4, CUL3 and SPOP. Part of a complex consisting of BRMS1, CUL3 and SPOP. Component of the BCR(KLHL21) E3 ubiquitin ligase complex, at least composed of CUL3, KLHL21 and RBX1. Component of the BCR(KLHL22) E3 ubiquitin ligase complex, at least composed of CUL3, KLHL22 and RBX1. Component of the BCR(KLHL25) E3 ubiquitin ligase complex, at least composed of CUL3, KLHL25 and RBX1. Part of a complex consisting of MACROH2A1, CUL3 and SPOP. Component of the BCR(KLHL42) E3 ubiquitin ligase complex, at least composed of CUL3 and KLHL42. Component of the BCR(KBTBD8) E3 ubiquitin ligase complex, at least composed of CUL3, KBTBD8 and RBX1. Interacts with KLHL42 (via the BTB domain). Interacts with KATNA1; the interaction is enhanced by KLHL42. Interacts with KCTD5, KLHL9, KLHL11, KLHL13, GAN, ZBTB16, KLHL3, KLHL15, KLHL20, KLHL36, GMCL2, BTBD1. Part of a complex that contains CUL3, RBX1 and GAN. Interacts (via BTB domain) with KLHL17; the interaction regulates surface GRIK2 expression. Interacts with KCTD7. Part of the BCR(GAN) complex containing GAN. Part of the BCR(KEAP1) complex containing KEAP1. vInteracts with KLHL10. Interacts with KAT5 and ATF2. Interacts with KCTD17 in the BCR(KCTD17) E3 ubiquitin ligase complex, at least composed of CUL3, KCTD17 and RBX1. Interacts (when neddylated) with ARIH1; leading to activate the E3 ligase activity of ARIH1. Interacts with COPS9. Interacts with PPP2R5B; this interaction is indirect and mediated through KLHL15-binding and leads to PPP2R5B proteasomal degradation. Interacts with RBBP8/CtIP; this interaction is indirect and mediated through KLHL15-binding and leads to RBBP8 proteasomal degradation. Interacts with KLHL24 in the BCR(KLHL24) E3 ubiquitin ligase complex, composed of CUL3, RBX1 and KLHL24. Interacts with RHOBTB2. Interacts (via BTB domain) with KLHL17; the interaction regulates surface GRIK2 expression. Interacts with AURKA and KLHL18 (via BTB domain). Interacts (unneddylated form) with DCUN1D1, DCUN1D2, DCUN1D3, DCUN1D4 and DCUN1D5; these interactions promote the cullin neddylation. Component of a BCR3 (BTB-CUL3-RBX1) E3 ubiquitin ligase complex, also named Cul3-RING ubiquitin ligase complex CUL3(KBTBD6/7), composed of CUL3, RBX1, KBTBD6 and KBTBD7. Component of the BCR(KBTBD2) E3 ubiquitin ligase complex, at least composed of CUL3, KBTBD2 and RBX1. Interacts with KBTBD2 (via the BTB domain). Component of the BCR(KBTBD4) E3 ubiquitin ligase complex, at least composed of CUL3, KBTBD4 and RBX1. Neddylated. Attachment of NEDD8 is required for the E3 ubiquitin-protein ligase activity of the BCR complex. Deneddylated via its interaction with the COP9 signalosome (CSN) complex.

The protein localises to the nucleus. It is found in the golgi apparatus. Its subcellular location is the cell projection. It localises to the cilium. The protein resides in the flagellum. The protein localises to the cytoplasm. It is found in the cytoskeleton. Its subcellular location is the spindle. It localises to the microtubule organizing center. The protein resides in the centrosome. The protein localises to the spindle pole. It participates in protein modification; protein ubiquitination. Functionally, core component of multiple cullin-RING-based BCR (BTB-CUL3-RBX1) E3 ubiquitin-protein ligase complexes which mediate the ubiquitination and subsequent proteasomal degradation of target proteins. BCR complexes and ARIH1 collaborate in tandem to mediate ubiquitination of target proteins. As a scaffold protein may contribute to catalysis through positioning of the substrate and the ubiquitin-conjugating enzyme. The E3 ubiquitin-protein ligase activity of the complex is dependent on the neddylation of the cullin subunit and is inhibited by the association of the deneddylated cullin subunit with TIP120A/CAND1. The functional specificity of the BCR complex depends on the BTB domain-containing protein as the substrate recognition component. BCR(KLHL42) is involved in ubiquitination of KATNA1. BCR(SPOP) is involved in ubiquitination of BMI1/PCGF4, BRMS1, MACROH2A1 and DAXX, GLI2 and GLI3. Can also form a cullin-RING-based BCR (BTB-CUL3-RBX1) E3 ubiquitin-protein ligase complex containing homodimeric SPOPL or the heterodimer formed by SPOP and SPOPL; these complexes have lower ubiquitin ligase activity. BCR(KLHL9-KLHL13) controls the dynamic behavior of AURKB on mitotic chromosomes and thereby coordinates faithful mitotic progression and completion of cytokinesis. BCR(KLHL12) is involved in ER-Golgi transport by regulating the size of COPII coats, thereby playing a key role in collagen export, which is required for embryonic stem (ES) cells division: BCR(KLHL12) acts by mediating monoubiquitination of SEC31 (SEC31A or SEC31B). BCR(KLHL3) acts as a regulator of ion transport in the distal nephron; by mediating ubiquitination of WNK4. The BCR(KLHL20) E3 ubiquitin ligase complex is involved in interferon response and anterograde Golgi to endosome transport: it mediates both ubiquitination leading to degradation and 'Lys-33'-linked ubiquitination. The BCR(KLHL21) E3 ubiquitin ligase complex regulates localization of the chromosomal passenger complex (CPC) from chromosomes to the spindle midzone in anaphase and mediates the ubiquitination of AURKB. The BCR(KLHL22) ubiquitin ligase complex mediates monoubiquitination of PLK1, leading to PLK1 dissociation from phosphoreceptor proteins and subsequent removal from kinetochores, allowing silencing of the spindle assembly checkpoint (SAC) and chromosome segregation. The BCR(KLHL22) ubiquitin ligase complex is also responsible for the amino acid-stimulated 'Lys-48' polyubiquitination and proteasomal degradation of DEPDC5. Through the degradation of DEPDC5, releases the GATOR1 complex-mediated inhibition of the TORC1 pathway. The BCR(KLHL25) ubiquitin ligase complex is involved in translational homeostasis by mediating ubiquitination and subsequent degradation of hypophosphorylated EIF4EBP1 (4E-BP1). The BCR(KLHL25) ubiquitin ligase complex is also involved in lipid synthesis by mediating ubiquitination and degradation of ACLY. The BCR(KBTBD8) complex acts by mediating monoubiquitination of NOLC1 and TCOF1, leading to remodel the translational program of differentiating cells in favor of neural crest specification. Involved in ubiquitination of cyclin E and of cyclin D1 (in vitro) thus involved in regulation of G1/S transition. Involved in the ubiquitination of KEAP1, ENC1 and KLHL41. In concert with ATF2 and RBX1, promotes degradation of KAT5 thereby attenuating its ability to acetylate and activate ATM. The BCR(KCTD17) E3 ubiquitin ligase complex mediates ubiquitination and degradation of TCHP, a down-regulator of cilium assembly, thereby inducing ciliogenesis. The BCR(KLHL24) E3 ubiquitin ligase complex mediates ubiquitination of KRT14, controls KRT14 levels during keratinocytes differentiation, and is essential for skin integrity. The BCR(KLHL18) E3 ubiquitin ligase complex mediates the ubiquitination of AURKA leading to its activation at the centrosome which is required for initiating mitotic entry. The BCR(KEAP1) E3 ubiquitin ligase complex acts as a key sensor of oxidative and electrophilic stress by mediating ubiquitination and degradation of NFE2L2/NRF2, a transcription factor regulating expression of many cytoprotective genes. As part of the CUL3(KBTBD6/7) E3 ubiquitin ligase complex functions mediates 'Lys-48' ubiquitination and proteasomal degradation of TIAM1. By controlling the ubiquitination of that RAC1 guanine exchange factors (GEF), regulates RAC1 signal transduction and downstream biological processes including the organization of the cytoskeleton, cell migration and cell proliferation. The BCR(KBTBD4) E3 ubiquitin ligase complex targets CoREST corepressor complex components RCOR1, KDM1A/LSD1 and HDAC2 for proteasomal degradation with RCOR1 likely to be the primary target while degradation of KDM1A and HDAC2 is likely due to their association with RCOR1. It also targets RCOR3, MIER2 and MIER3 for proteasomal degradation as well as associated proteins ZNF217 and RREB1 with degradation being dependent on the presence of an ELM2 domain in the target proteins. The BCR(ARMC5) complex mediates premature transcription termination of transcripts that are unfavorably configured for transcriptional elongation by mediating ubiquitination of Pol II subunit POLR2A. Required for 'Lys-63'-linked ubiquitination of large ribosomal subunit protein MRPL12. This is Cullin-3 (Cul3) from Rattus norvegicus (Rat).